The primary structure comprises 59 residues: Venom protein 37.1 (59 aa).

The first 18 residues, 1-18, serve as a signal peptide directing secretion; it reads MVSTLMIASVKLRLYCTA.

Belongs to the non-disulfide-bridged peptide (NDBP) superfamily. Long chain multifunctional peptide (group 2) family. Expressed by the venom gland.

The protein resides in the secreted. The protein is Venom protein 37.1 of Lychas mucronatus (Chinese swimming scorpion).